Here is a 334-residue protein sequence, read N- to C-terminus: Lipoyl synthase (334 aa).

[4Fe-4S] cluster-binding residues include Cys-71, Cys-76, Cys-82, Cys-97, Cys-101, Cys-104, and Ser-312. Residues 83–301 (WSHGTATFMV…RQEGLRRGFR (219 aa)) form the Radical SAM core domain.

Belongs to the radical SAM superfamily. Lipoyl synthase family. The cofactor is [4Fe-4S] cluster.

Its subcellular location is the cytoplasm. The catalysed reaction is [[Fe-S] cluster scaffold protein carrying a second [4Fe-4S](2+) cluster] + N(6)-octanoyl-L-lysyl-[protein] + 2 oxidized [2Fe-2S]-[ferredoxin] + 2 S-adenosyl-L-methionine + 4 H(+) = [[Fe-S] cluster scaffold protein] + N(6)-[(R)-dihydrolipoyl]-L-lysyl-[protein] + 4 Fe(3+) + 2 hydrogen sulfide + 2 5'-deoxyadenosine + 2 L-methionine + 2 reduced [2Fe-2S]-[ferredoxin]. It participates in protein modification; protein lipoylation via endogenous pathway; protein N(6)-(lipoyl)lysine from octanoyl-[acyl-carrier-protein]: step 2/2. Catalyzes the radical-mediated insertion of two sulfur atoms into the C-6 and C-8 positions of the octanoyl moiety bound to the lipoyl domains of lipoate-dependent enzymes, thereby converting the octanoylated domains into lipoylated derivatives. This is Lipoyl synthase from Halorhodospira halophila (strain DSM 244 / SL1) (Ectothiorhodospira halophila (strain DSM 244 / SL1)).